The chain runs to 185 residues: Large ribosomal subunit protein bL25 (185 aa).

This sequence belongs to the bacterial ribosomal protein bL25 family. CTC subfamily. In terms of assembly, part of the 50S ribosomal subunit; part of the 5S rRNA/L5/L18/L25 subcomplex. Contacts the 5S rRNA. Binds to the 5S rRNA independently of L5 and L18.

Functionally, this is one of the proteins that binds to the 5S RNA in the ribosome where it forms part of the central protuberance. In Chlamydia caviae (strain ATCC VR-813 / DSM 19441 / 03DC25 / GPIC) (Chlamydophila caviae), this protein is Large ribosomal subunit protein bL25.